A 4391-amino-acid chain; its full sequence is MGWRAAGALLLALLLHGRLLAVTHGLRAYDGLSLPEDIETVTASQMRWTHSYLSDDEDMLADSISGDDLGSGDLGSGDFQMVYFRALVNFTRSIEYSPQLEDAGSREFREVSEAVVDTLESEYLKIPGDQVVSVVFIKELDGWVFVELDVGSEGNADGAQIQEMLLRVISSGSVASYVTSPQGFQFRRLGTVPQFPRACTEAEFACHSYNECVALEYRCDRRPDCRDMSDELNCEEPVLGISPTFSLLVETTSLPPRPETTIMRQPPVTHAPQPLLPGSVRPLPCGPQEAACRNGHCIPRDYLCDGQEDCEDGSDELDCGPPPPCEPNEFPCGNGHCALKLWRCDGDFDCEDRTDEANCPTKRPEEVCGPTQFRCVSTNMCIPASFHCDEESDCPDRSDEFGCMPPQVVTPPRESIQASRGQTVTFTCVAIGVPTPIINWRLNWGHIPSHPRVTVTSEGGRGTLIIRDVKESDQGAYTCEAMNARGMVFGIPDGVLELVPQRGPCPDGHFYLEHSAACLPCFCFGITSVCQSTRRFRDQIRLRFDQPDDFKGVNVTMPAQPGTPPLSSTQLQIDPSLHEFQLVDLSRRFLVHDSFWALPEQFLGNKVDSYGGSLRYNVRYELARGMLEPVQRPDVVLMGAGYRLLSRGHTPTQPGALNQRQVQFSEEHWVHESGRPVQRAELLQVLQSLEAVLIQTVYNTKMASVGLSDIAMDTTVTHATSHGRAHSVEECRCPIGYSGLSCESCDAHFTRVPGGPYLGTCSGCNCNGHASSCDPVYGHCLNCQHNTEGPQCNKCKAGFFGDAMKATATSCRPCPCPYIDASRRFSDTCFLDTDGQATCDACAPGYTGRRCESCAPGYEGNPIQPGGKCRPVNQEIVRCDERGSMGTSGEACRCKNNVVGRLCNECADGSFHLSTRNPDGCLKCFCMGVSRHCTSSSWSRAQLHGASEEPGHFSLTNAASTHTTNEGIFSPTPGELGFSSFHRLLSGPYFWSLPSRFLGDKVTSYGGELRFTVTQRSQPGSTPLHGQPLVVLQGNNIILEHHVAQEPSPGQPSTFIVPFREQAWQRPDGQPATREHLLMALAGIDTLLIRASYAQQPAESRVSGISMDVAVPEETGQDPALEVEQCSCPPGYRGPSCQDCDTGYTRTPSGLYLGTCERCSCHGHSEACEPETGACQGCQHHTEGPRCEQCQPGYYGDAQRGTPQDCQLCPCYGDPAAGQAAHTCFLDTDGHPTCDACSPGHSGRHCERCAPGYYGNPSQGQPCQRDSQVPGPIGCNCDPQGSVSSQCDAAGQCQCKAQVEGLTCSHCRPHHFHLSASNPDGCLPCFCMGITQQCASSAYTRHLISTHFAPGDFQGFALVNPQRNSRLTGEFTVEPVPEGAQLSFGNFAQLGHESFYWQLPETYQGDKVAAYGGKLRYTLSYTAGPQGSPLSDPDVQITGNNIMLVASQPALQGPERRSYEIMFREEFWRRPDGQPATREHLLMALADLDELLIRATFSSVPLAASISAVSLEVAQPGPSNRPRALEVEECRCPPGYIGLSCQDCAPGYTRTGSGLYLGHCELCECNGHSDLCHPETGACSQCQHNAAGEFCELCAPGYYGDATAGTPEDCQPCACPLTNPENMFSRTCESLGAGGYRCTACEPGYTGQYCEQCGPGYVGNPSVQGGQCLPETNQAPLVVEVHPARSIVPQGGSHSLRCQVSGSPPHYFYWSREDGRPVPSGTQQRHQGSELHFPSVQPSDAGVYICTCRNLHQSNTSRAELLVTEAPSKPITVTVEEQRSQSVRPGADVTFICTAKSKSPAYTLVWTRLHNGKLPTRAMDFNGILTIRNVQLSDAGTYVCTGSNMFAMDQGTATLHVQASGTLSAPVVSIHPPQLTVQPGQLAEFRCSATGSPTPTLEWTGGPGGQLPAKAQIHGGILRLPAVEPTDQAQYLCRAHSSAGQQVARAVLHVHGGGGPRVQVSPERTQVHAGRTVRLYCRAAGVPSATITWRKEGGSLPPQARSERTDIATLLIPAITTADAGFYLCVATSPAGTAQARIQVVVLSASDASPPPVKIESSSPSVTEGQTLDLNCVVAGSAHAQVTWYRRGGSLPPHTQVHGSRLRLPQVSPADSGEYVCRVENGSGPKEASITVSVLHGTHSGPSYTPVPGSTRPIRIEPSSSHVAEGQTLDLNCVVPGQAHAQVTWHKRGGSLPARHQTHGSLLRLHQVTPADSGEYVCHVVGTSGPLEASVLVTIEASVIPGPIPPVRIESSSSTVAEGQTLDLSCVVAGQAHAQVTWYKRGGSLPARHQVRGSRLYIFQASPADAGQYVCRASNGMEASITVTVTGTQGANLAYPAGSTQPIRIEPSSSQVAEGQTLDLNCVVPGQSHAQVTWHKRGGSLPVRHQTHGSLLRLYQASPADSGEYVCRVLGSSVPLEASVLVTIEPAGSVPALGVTPTVRIESSSSQVAEGQTLDLNCLVAGQAHAQVTWHKRGGSLPARHQVHGSRLRLLQVTPADSGEYVCRVVGSSGTQEASVLVTIQQRLSGSHSQGVAYPVRIESSSASLANGHTLDLNCLVASQAPHTITWYKRGGSLPSRHQIVGSRLRIPQVTPADSGEYVCHVSNGAGSRETSLIVTIQGSGSSHVPSVSPPIRIESSSPTVVEGQTLDLNCVVARQPQAIITWYKRGGSLPSRHQTHGSHLRLHQMSVADSGEYVCRANNNIDALEASIVISVSPSAGSPSAPGSSMPIRIESSSSHVAEGETLDLNCVVPGQAHAQVTWHKRGGSLPSHHQTRGSRLRLHHVSPADSGEYVCRVMGSSGPLEASVLVTIEASGSSAVHVPAPGGAPPIRIEPSSSRVAEGQTLDLKCVVPGQAHAQVTWHKRGGNLPARHQVHGPLLRLNQVSPADSGEYSCQVTGSSGTLEASVLVTIEPSSPGPIPAPGLAQPIYIEASSSHVTEGQTLDLNCVVPGQAHAQVTWYKRGGSLPARHQTHGSQLRLHLVSPADSGEYVCRAASGPGPEQEASFTVTVPPSEGSSYRLRSPVISIDPPSSTVQQGQDASFKCLIHDGAAPISLEWKTRNQELEDNVHISPNGSIITIVGTRPSNHGTYRCVASNAYGVAQSVVNLSVHGPPTVSVLPEGPVWVKVGKAVTLECVSAGEPRSSARWTRISSTPAKLEQRTYGLMDSHAVLQISSAKPSDAGTYVCLAQNALGTAQKQVEVIVDTGAMAPGAPQVQAEEAELTVEAGHTATLRCSATGSPAPTIHWSKLRSPLPWQHRLEGDTLIIPRVAQQDSGQYICNATSPAGHAEATIILHVESPPYATTVPEHASVQAGETVQLQCLAHGTPPLTFQWSRVGSSLPGRATARNELLHFERAAPEDSGRYRCRVTNKVGSAEAFAQLLVQGPPGSLPATSIPAGSTPTVQVTPQLETKSIGASVEFHCAVPSDRGTQLRWFKEGGQLPPGHSVQDGVLRIQNLDQSCQGTYICQAHGPWGKAQASAQLVIQALPSVLINIRTSVQTVVVGHAVEFECLALGDPKPQVTWSKVGGHLRPGIVQSGGVVRIAHVELADAGQYRCTATNAAGTTQSHVLLLVQALPQISMPQEVRVPAGSAAVFPCIASGYPTPDISWSKLDGSLPPDSRLENNMLMLPSVRPQDAGTYVCTATNRQGKVKAFAHLQVPERVVPYFTQTPYSFLPLPTIKDAYRKFEIKITFRPDSADGMLLYNGQKRVPGSPTNLANRQPDFISFGLVGGRPEFRFDAGSGMATIRHPTPLALGHFHTVTLLRSLTQGSLIVGDLAPVNGTSQGKFQGLDLNEELYLGGYPDYGAIPKAGLSSGFIGCVRELRIQGEEIVFHDLNLTAHGISHCPTCRDRPCQNGGQCHDSESSSYVCVCPAGFTGSRCEHSQALHCHPEACGPDATCVNRPDGRGYTCRCHLGRSGLRCEEGVTVTTPSLSGAGSYLALPALTNTHHELRLDVEFKPLAPDGVLLFSGGKSGPVEDFVSLAMVGGHLEFRYELGSGLAVLRSAEPLALGRWHRVSAERLNKDGSLRVNGGRPVLRSSPGKSQGLNLHTLLYLGGVEPSVPLSPATNMSAHFRGCVGEVSVNGKRLDLTYSFLGSQGIGQCYDSSPCERQPCQHGATCMPAGEYEFQCLCRDGFKGDLCEHEENPCQLREPCLHGGTCQGTRCLCLPGFSGPRCQQGSGHGIAESDWHLEGSGGNDAPGQYGAYFHDDGFLAFPGHVFSRSLPEVPETIELEVRTSTASGLLLWQGVEVGEAGQGKDFISLGLQDGHLVFRYQLGSGEARLVSEDPINDGEWHRVTALREGRRGSIQVDGEELVSGRSPGPNVAVNAKGSVYIGGAPDVATLTGGRFSSGITGCVKNLVLHSARPGAPPPQPLDLQHRAQAGANTRPCPS.

The first 21 residues, 1–21 (MGWRAAGALLLALLLHGRLLA), serve as a signal peptide directing secretion. Threonine 42 carries an O-linked (GalNAc...) threonine glycan. Serine 65, serine 71, and serine 76 each carry an O-linked (Xyl...) (heparan sulfate) serine glycan. In terms of domain architecture, SEA spans 80–191 (QMVYFRALVN…QGFQFRRLGT (112 aa)). The N-linked (GlcNAc...) asparagine glycan is linked to asparagine 89. LDL-receptor class A domains follow at residues 198–235 (ACTEAEFACHSYNECVALEYRCDRRPDCRDMSDELNCE), 284–320 (PCGPQEAACRNGHCIPRDYLCDGQEDCEDGSDELDCG), 324–360 (PCEPNEFPCGNGHCALKLWRCDGDFDCEDRTDEANCP), and 367–404 (VCGPTQFRCVSTNMCIPASFHCDEESDCPDRSDEFGCM). 12 disulfides stabilise this stretch: cysteine 199–cysteine 212, cysteine 206–cysteine 225, cysteine 219–cysteine 234, cysteine 285–cysteine 297, cysteine 292–cysteine 310, cysteine 304–cysteine 319, cysteine 325–cysteine 337, cysteine 332–cysteine 350, cysteine 344–cysteine 359, cysteine 368–cysteine 381, cysteine 375–cysteine 394, and cysteine 388–cysteine 403. The Ig-like C2-type 1 domain occupies 405–504 (PPQVVTPPRE…VLELVPQRGP (100 aa)). Residues 521 to 530 (CFCFGITSVC) form the Laminin EGF-like 1; first part domain. One can recognise a Laminin IV type A 1 domain in the interval 538–730 (DQIRLRFDQP…SHGRAHSVEE (193 aa)). N-linked (GlcNAc...) asparagine glycosylation occurs at asparagine 554. One can recognise a Laminin EGF-like 1; second part domain in the interval 731-763 (CRCPIGYSGLSCESCDAHFTRVPGGPYLGTCSG). 11 disulfide bridges follow: cysteine 764/cysteine 773, cysteine 766/cysteine 780, cysteine 783/cysteine 792, cysteine 795/cysteine 811, cysteine 814/cysteine 829, cysteine 816/cysteine 839, cysteine 842/cysteine 851, cysteine 854/cysteine 869, cysteine 879/cysteine 892, cysteine 894/cysteine 903, and cysteine 906/cysteine 921. Laminin EGF-like domains are found at residues 764–813 (CNCN…SCRP) and 814–871 (CPCP…KCRP). The Laminin EGF-like 4; truncated domain maps to 879-923 (CDERGSMGTSGEACRCKNNVVGRLCNECADGSFHLSTRNPDGCLK). One can recognise a Laminin EGF-like 5; first part domain in the interval 924-933 (CFCMGVSRHC). The region spanning 941 to 1125 (AQLHGASEEP…GQDPALEVEQ (185 aa)) is the Laminin IV type A 2 domain. The region spanning 1126–1158 (CSCPPGYRGPSCQDCDTGYTRTPSGLYLGTCER) is the Laminin EGF-like 5; second part domain. 12 disulfides stabilise this stretch: cysteine 1159/cysteine 1168, cysteine 1161/cysteine 1175, cysteine 1178/cysteine 1187, cysteine 1190/cysteine 1206, cysteine 1209/cysteine 1224, cysteine 1211/cysteine 1234, cysteine 1237/cysteine 1246, cysteine 1249/cysteine 1263, cysteine 1275/cysteine 1287, cysteine 1277/cysteine 1293, cysteine 1295/cysteine 1304, and cysteine 1307/cysteine 1322. Laminin EGF-like domains lie at 1159–1208 (CSCH…DCQL), 1209–1265 (CPCY…PCQR), and 1275–1324 (CNCD…GCLP). In terms of domain architecture, Laminin EGF-like 9; first part spans 1325–1334 (CFCMGITQQC). The region spanning 1344-1529 (ISTHFAPGDF…NRPRALEVEE (186 aa)) is the Laminin IV type A 3 domain. A Laminin EGF-like 9; second part domain is found at 1530–1562 (CRCPPGYIGLSCQDCAPGYTRTGSGLYLGHCEL). Disulfide bonds link cysteine 1563/cysteine 1572, cysteine 1565/cysteine 1579, cysteine 1582/cysteine 1591, cysteine 1594/cysteine 1610, cysteine 1613/cysteine 1628, cysteine 1615/cysteine 1638, cysteine 1641/cysteine 1650, and cysteine 1653/cysteine 1668. Laminin EGF-like domains are found at residues 1563 to 1612 (CECN…DCQP) and 1613 to 1670 (CACP…QCLP). Ig-like C2-type domains are found at residues 1677-1771 (LVVE…SKPI), 1772-1865 (TVTV…TLSA), 1866-1955 (PVVS…GGGG), 1956-2051 (PRVQ…ASPP), 2052-2151 (PVKI…PGST), 2152-2244 (RPIR…PGPI), 2245-2340 (PPVR…AGST), 2341-2436 (QPIR…LGVT), 2437-2533 (PTVR…QGVA), 2534-2629 (YPVR…PSVS), 2630-2726 (PPIR…PGSS), 2727-2826 (MPIR…PGGA), 2827-2924 (PPIR…PGLA), 2925-3021 (QPIY…RLRS), 3022-3112 (PVIS…HGPP), 3113-3211 (TVSV…APGA), 3212-3298 (PQVQ…VESP), 3299-3399 (PYAT…AGST), 3400-3488 (PTVQ…ALPS), 3489-3574 (VLIN…LVQA), and 3575-3662 (LPQI…PERV). N-linked (GlcNAc...) asparagine glycosylation occurs at asparagine 1755. Asparagine 2121 carries N-linked (GlcNAc...) asparagine glycosylation. A disordered region spans residues 2994–3014 (ASGPGPEQEASFTVTVPPSEG). An O-linked (Xyl...) (chondroitin sulfate) serine glycan is attached at serine 2995. The segment covering 3003–3014 (ASFTVTVPPSEG) has biased composition (polar residues). Asparagine 3072 and asparagine 3105 each carry an N-linked (GlcNAc...) asparagine glycan. Asparagine 3279 carries an N-linked (GlcNAc...) asparagine glycan. The 181-residue stretch at 3663 to 3843 (VPYFTQTPYS…DLNLTAHGIS (181 aa)) folds into the Laminin G-like 1 domain. N-linked (GlcNAc...) asparagine glycosylation is found at asparagine 3780 and asparagine 3836. 7 disulfide bridges follow: cysteine 3819/cysteine 3845, cysteine 3848/cysteine 3859, cysteine 3853/cysteine 3869, cysteine 3871/cysteine 3880, cysteine 3888/cysteine 3899, cysteine 3893/cysteine 3910, and cysteine 3912/cysteine 3921. EGF-like domains are found at residues 3844 to 3881 (HCPTCRDRPCQNGGQCHDSESSSYVCVCPAGFTGSRCE) and 3884 to 3922 (QALHCHPEACGPDATCVNRPDGRGYTCRCHLGRSGLRCE). The region spanning 3928–4103 (TTPSLSGAGS…LGSQGIGQCY (176 aa)) is the Laminin G-like 2 domain. Serine 3933 carries O-linked (Xyl...) (chondroitin sulfate) serine glycosylation. Asparagine 4068 carries N-linked (GlcNAc...) asparagine glycosylation. 7 disulfide bridges follow: cysteine 4076–cysteine 4102, cysteine 4108–cysteine 4119, cysteine 4113–cysteine 4129, cysteine 4131–cysteine 4140, cysteine 4147–cysteine 4159, cysteine 4153–cysteine 4164, and cysteine 4166–cysteine 4175. 2 EGF-like domains span residues 4104-4141 (DSSPCERQPCQHGATCMPAGEYEFQCLCRDGFKGDLCE) and 4143-4176 (EENPCQLREPCLHGGTCQGTRCLCLPGFSGPRCQ). The interval 4149–4151 (LRE) is mediates motor neuron attachment. Serine 4179 and serine 4193 each carry an O-linked (Xyl...) (chondroitin sulfate) serine glycan. Positions 4201–4389 (QYGAYFHDDG…AQAGANTRPC (189 aa)) constitute a Laminin G-like 3 domain. 2 residues coordinate Ca(2+): aspartate 4258 and leucine 4275. The interval 4299–4301 (LRE) is mediates motor neuron attachment. Ca(2+) contacts are provided by alanine 4325 and asparagine 4327. Cysteine 4355 and cysteine 4389 are joined by a disulfide. A disordered region spans residues 4364 to 4391 (ARPGAPPPQPLDLQHRAQAGANTRPCPS).

In terms of assembly, has a strong tendency to aggregate in dimers or stellate structures. Interacts with other basement membrane components such as laminin, prolargin and collagen type IV. Interacts with COL13A1. Interacts with FGFBP1. Interacts with VWA1. Interacts (via C-terminus) with ECM1 (via C-terminus). Interacts with SVEP1. In terms of processing, proteolytic processing produces the C-terminal angiogenic peptide, endorepellin. This peptide can be further processed to produce the LG3 peptide. Post-translationally, O-glycosylated with core 1 or possibly core 8 glycans. Contains three heparan sulfate chains. Also contains chondroitin sulfate. In terms of tissue distribution, detected in cerebrospinal fluid, fibroblasts and urine (at protein level).

It localises to the secreted. It is found in the extracellular space. The protein resides in the extracellular matrix. The protein localises to the basement membrane. Its function is as follows. Integral component of basement membranes. Component of the glomerular basement membrane (GBM), responsible for the fixed negative electrostatic membrane charge, and which provides a barrier which is both size- and charge-selective. It serves as an attachment substrate for cells. Plays essential roles in vascularization. Critical for normal heart development and for regulating the vascular response to injury. Also required for avascular cartilage development. Anti-angiogenic and anti-tumor peptide that inhibits endothelial cell migration, collagen-induced endothelial tube morphogenesis and blood vessel growth in the chorioallantoic membrane. Blocks endothelial cell adhesion to fibronectin and type I collagen. Anti-tumor agent in neovascularization. Interaction with its ligand, integrin alpha2/beta1, is required for the anti-angiogenic properties. Evokes a reduction in phosphorylation of receptor tyrosine kinases via alpha2/beta1 integrin-mediated activation of the tyrosine phosphatase, PTPN6. In terms of biological role, has anti-angiogenic properties that require binding of calcium ions for full activity. This Homo sapiens (Human) protein is Basement membrane-specific heparan sulfate proteoglycan core protein (HSPG2).